The chain runs to 576 residues: Adenine deaminase 2 (576 aa).

The protein belongs to the metallo-dependent hydrolases superfamily. Adenine deaminase family. Mn(2+) serves as cofactor.

It catalyses the reaction adenine + H2O + H(+) = hypoxanthine + NH4(+). The polypeptide is Adenine deaminase 2 (Desulfotalea psychrophila (strain LSv54 / DSM 12343)).